The primary structure comprises 215 residues: Glycerol-3-phosphate acyltransferase (215 aa).

6 helical membrane passes run 3–23 (LILL…LWIG), 42–61 (TNTF…LIDI), 68–90 (TLLP…FAVL), 110–130 (AGVL…VFVL), 134–154 (LFSM…ISVL), and 162–182 (LLPS…AIII).

The protein belongs to the PlsY family. As to quaternary structure, probably interacts with PlsX.

The protein resides in the cell membrane. It catalyses the reaction an acyl phosphate + sn-glycerol 3-phosphate = a 1-acyl-sn-glycero-3-phosphate + phosphate. The protein operates within lipid metabolism; phospholipid metabolism. Catalyzes the transfer of an acyl group from acyl-phosphate (acyl-PO(4)) to glycerol-3-phosphate (G3P) to form lysophosphatidic acid (LPA). This enzyme utilizes acyl-phosphate as fatty acyl donor, but not acyl-CoA or acyl-ACP. The chain is Glycerol-3-phosphate acyltransferase from Streptococcus equi subsp. equi (strain 4047).